The sequence spans 199 residues: Ribosomal RNA large subunit methyltransferase E (199 aa).

Positions 53, 55, 73, 92, and 114 each coordinate S-adenosyl-L-methionine. Catalysis depends on lysine 154, which acts as the Proton acceptor.

The protein belongs to the class I-like SAM-binding methyltransferase superfamily. RNA methyltransferase RlmE family.

The protein resides in the cytoplasm. It catalyses the reaction uridine(2552) in 23S rRNA + S-adenosyl-L-methionine = 2'-O-methyluridine(2552) in 23S rRNA + S-adenosyl-L-homocysteine + H(+). Specifically methylates the uridine in position 2552 of 23S rRNA at the 2'-O position of the ribose in the fully assembled 50S ribosomal subunit. This is Ribosomal RNA large subunit methyltransferase E from Treponema denticola (strain ATCC 35405 / DSM 14222 / CIP 103919 / JCM 8153 / KCTC 15104).